We begin with the raw amino-acid sequence, 972 residues long: Isoleucine--tRNA ligase (972 aa).

The short motif at 63–73 (PYANGNIHIGH) is the 'HIGH' region element. Glu603 serves as a coordination point for L-isoleucyl-5'-AMP. Positions 644–648 (KMSKS) match the 'KMSKS' region motif. ATP is bound at residue Lys647.

Belongs to the class-I aminoacyl-tRNA synthetase family. IleS type 1 subfamily. In terms of assembly, monomer.

The protein resides in the cytoplasm. It catalyses the reaction tRNA(Ile) + L-isoleucine + ATP = L-isoleucyl-tRNA(Ile) + AMP + diphosphate. In terms of biological role, catalyzes the attachment of isoleucine to tRNA(Ile). As IleRS can inadvertently accommodate and process structurally similar amino acids such as valine, to avoid such errors it has two additional distinct tRNA(Ile)-dependent editing activities. One activity is designated as 'pretransfer' editing and involves the hydrolysis of activated Val-AMP. The other activity is designated 'posttransfer' editing and involves deacylation of mischarged Val-tRNA(Ile). The protein is Isoleucine--tRNA ligase of Brucella abortus (strain 2308).